We begin with the raw amino-acid sequence, 393 residues long: Probable galacturonosyltransferase-like 8 (393 aa).

Over Met-1–Arg-4 the chain is Cytoplasmic. A helical; Signal-anchor for type II membrane protein transmembrane segment spans residues Phe-5–Ile-25. Residues Pro-26–Leu-393 are Lumenal-facing. N-linked (GlcNAc...) asparagine glycosylation occurs at Asn-226.

This sequence belongs to the glycosyltransferase 8 family.

The protein resides in the golgi apparatus membrane. It participates in glycan metabolism; pectin biosynthesis. Functionally, may be involved in pectin and/or xylans biosynthesis in cell walls. The sequence is that of Probable galacturonosyltransferase-like 8 (GATL8) from Arabidopsis thaliana (Mouse-ear cress).